The following is a 554-amino-acid chain: Acurin A biosynthesis cluster MFS-type transporter (554 aa).

Helical transmembrane passes span 24 to 44 (WLIF…TSII), 60 to 80 (LYIW…AIVG), 96 to 116 (LLIF…GMLL), 123 to 143 (GLGG…MVSL), and 151 to 171 (GILG…GGGF). N-linked (GlcNAc...) asparagine glycosylation is present at Asn-174. 3 helical membrane passes run 179-199 (WIFY…VTLL), 219-239 (WGGI…LTWA), and 251-271 (IVPL…EALP). A glycan (N-linked (GlcNAc...) asparagine) is linked at Asn-283. Transmembrane regions (helical) follow at residues 289-309 (LFVM…FLPI), 324-344 (VMLF…GILM), 352-372 (SFQY…TLLD), 385-405 (ILFG…ILAS), 417-437 (TWIF…AAVF), and 496-516 (VWQV…LVKA).

Belongs to the major facilitator superfamily.

The protein localises to the membrane. Functionally, MFS-type transporter that may have a role in the biosynthesis of acurin A, a highly reduced polyketide coupled to a serine via a peptide bond; either in extra- or intracellular transport. In Aspergillus aculeatus (strain ATCC 16872 / CBS 172.66 / WB 5094), this protein is Acurin A biosynthesis cluster MFS-type transporter.